The sequence spans 94 residues: Co-chaperonin GroES (94 aa).

It belongs to the GroES chaperonin family. Heptamer of 7 subunits arranged in a ring. Interacts with the chaperonin GroEL.

It localises to the cytoplasm. In terms of biological role, together with the chaperonin GroEL, plays an essential role in assisting protein folding. The GroEL-GroES system forms a nano-cage that allows encapsulation of the non-native substrate proteins and provides a physical environment optimized to promote and accelerate protein folding. GroES binds to the apical surface of the GroEL ring, thereby capping the opening of the GroEL channel. This Orientia tsutsugamushi (Rickettsia tsutsugamushi) protein is Co-chaperonin GroES.